The following is a 364-amino-acid chain: tRNA/tmRNA (uracil-C(5))-methyltransferase (364 aa).

Residues glutamine 188, tyrosine 216, asparagine 221, glutamate 237, and aspartate 297 each coordinate S-adenosyl-L-methionine. Catalysis depends on cysteine 322, which acts as the Nucleophile. Residue glutamate 356 is the Proton acceptor of the active site.

It belongs to the class I-like SAM-binding methyltransferase superfamily. RNA M5U methyltransferase family. TrmA subfamily.

The enzyme catalyses uridine(54) in tRNA + S-adenosyl-L-methionine = 5-methyluridine(54) in tRNA + S-adenosyl-L-homocysteine + H(+). The catalysed reaction is uridine(341) in tmRNA + S-adenosyl-L-methionine = 5-methyluridine(341) in tmRNA + S-adenosyl-L-homocysteine + H(+). In terms of biological role, dual-specificity methyltransferase that catalyzes the formation of 5-methyluridine at position 54 (m5U54) in all tRNAs, and that of position 341 (m5U341) in tmRNA (transfer-mRNA). This is tRNA/tmRNA (uracil-C(5))-methyltransferase from Mannheimia succiniciproducens (strain KCTC 0769BP / MBEL55E).